Consider the following 214-residue polypeptide: ATP phosphoribosyltransferase (214 aa).

Belongs to the ATP phosphoribosyltransferase family. Short subfamily. As to quaternary structure, heteromultimer composed of HisG and HisZ subunits.

It localises to the cytoplasm. The enzyme catalyses 1-(5-phospho-beta-D-ribosyl)-ATP + diphosphate = 5-phospho-alpha-D-ribose 1-diphosphate + ATP. The protein operates within amino-acid biosynthesis; L-histidine biosynthesis; L-histidine from 5-phospho-alpha-D-ribose 1-diphosphate: step 1/9. Catalyzes the condensation of ATP and 5-phosphoribose 1-diphosphate to form N'-(5'-phosphoribosyl)-ATP (PR-ATP). Has a crucial role in the pathway because the rate of histidine biosynthesis seems to be controlled primarily by regulation of HisG enzymatic activity. The sequence is that of ATP phosphoribosyltransferase from Azoarcus sp. (strain BH72).